A 715-amino-acid chain; its full sequence is Bromodomain-containing protein DDB_G0278469 (715 aa).

Disordered stretches follow at residues 18–46 and 186–425; these read EDNNNNNNNNNNKENINNDDNNINPNRNA and QQQK…ETKQ. Composition is skewed to low complexity over residues 20-45, 186-204, 215-227, 234-254, and 261-281; these read NNNNNNNNNNKENINNDDNNINPNRN, QQQKQQQQQQQQQQAPTAQ, LTAATTTPTTTTT, TAPPTTVASSSTIPKTTTTKK, and SKSNLKSSQNKLSTTTTTTIT. Positions 307-316 are enriched in basic and acidic residues; the sequence is KPKEQKKDIM. The stretch at 322 to 368 forms a coiled coil; the sequence is SKKANTHEEKEEGESEEEEEEEEEEEEEEEEEEEEEQLEDKQKQTKT. The span at 332 to 359 shows a compositional bias: acidic residues; it reads EEGESEEEEEEEEEEEEEEEEEEEEEQL. The segment covering 366–389 has biased composition (polar residues); the sequence is TKTPISQNKSASSNIKPLSKTSKS. Low complexity predominate over residues 405 to 414; it reads KKITSTTVTR. The stretch at 437–470 forms a coiled coil; sequence KQQTQEEIEQELKLESIRKRIEQFINKFEKEIND. Residues 474-599 form the Bromo domain; that stretch reads KDLDEGKRKI…IQFYKSLLET (126 aa). Residues 653-715 form a disordered region; sequence LVDEDEDECL…SEEEDQEATN (63 aa). Residues 662-672 show a composition bias toward polar residues; the sequence is LNNQNNPTTYD. Residues 684-715 show a composition bias toward acidic residues; sequence QESDEESDEESDEESDEERDQLSEEEDQEATN.

The polypeptide is Bromodomain-containing protein DDB_G0278469 (Dictyostelium discoideum (Social amoeba)).